The following is a 110-amino-acid chain: Large ribosomal subunit protein uL24 (110 aa).

Belongs to the universal ribosomal protein uL24 family. As to quaternary structure, part of the 50S ribosomal subunit.

In terms of biological role, one of two assembly initiator proteins, it binds directly to the 5'-end of the 23S rRNA, where it nucleates assembly of the 50S subunit. One of the proteins that surrounds the polypeptide exit tunnel on the outside of the subunit. The sequence is that of Large ribosomal subunit protein uL24 from Frankia alni (strain DSM 45986 / CECT 9034 / ACN14a).